Here is a 134-residue protein sequence, read N- to C-terminus: Large ribosomal subunit protein bL21 (134 aa).

The protein belongs to the bacterial ribosomal protein bL21 family. As to quaternary structure, part of the 50S ribosomal subunit. Contacts protein L20.

Its function is as follows. This protein binds to 23S rRNA in the presence of protein L20. The protein is Large ribosomal subunit protein bL21 of Pelagibacter ubique (strain HTCC1062).